Reading from the N-terminus, the 320-residue chain is ATP-dependent 6-phosphofructokinase (320 aa).

Residue Gly-12 coordinates ATP. 22–26 (RGVVR) provides a ligand contact to ADP. ATP-binding positions include 73-74 (RF) and 103-106 (GDGS). Position 104 (Asp-104) interacts with Mg(2+). A substrate-binding site is contributed by 126-128 (TID). The active-site Proton acceptor is the Asp-128. ADP is bound at residue Arg-155. Residues Arg-163 and 170–172 (MGR) each bind substrate. ADP-binding positions include 186-188 (GCE), Lys-212, and 214-216 (KKH). Residues Glu-223, Arg-244, and 250-253 (HIQR) each bind substrate.

Belongs to the phosphofructokinase type A (PFKA) family. ATP-dependent PFK group I subfamily. Prokaryotic clade 'B1' sub-subfamily. In terms of assembly, homotetramer. Requires Mg(2+) as cofactor.

Its subcellular location is the cytoplasm. The catalysed reaction is beta-D-fructose 6-phosphate + ATP = beta-D-fructose 1,6-bisphosphate + ADP + H(+). It functions in the pathway carbohydrate degradation; glycolysis; D-glyceraldehyde 3-phosphate and glycerone phosphate from D-glucose: step 3/4. With respect to regulation, allosterically activated by ADP and other diphosphonucleosides, and allosterically inhibited by phosphoenolpyruvate. Functionally, catalyzes the phosphorylation of D-fructose 6-phosphate to fructose 1,6-bisphosphate by ATP, the first committing step of glycolysis. The sequence is that of ATP-dependent 6-phosphofructokinase from Photobacterium profundum (strain SS9).